A 79-amino-acid chain; its full sequence is MNLILAILLMVVCLLAGFFLGTWFSQRQTKKLLMDNPPLNEDAVRLMMGSMGRKPSEVQVQQVLRQIRAAAKQSDTNKK.

The helical transmembrane segment at 4–24 threads the bilayer; sequence ILAILLMVVCLLAGFFLGTWF.

Belongs to the UPF0154 family.

It localises to the cell membrane. This chain is UPF0154 protein llmg_1186, found in Lactococcus lactis subsp. cremoris (strain MG1363).